Here is a 130-residue protein sequence, read N- to C-terminus: Holo-[acyl-carrier-protein] synthase (130 aa).

Aspartate 8 and glutamate 62 together coordinate Mg(2+).

The protein belongs to the P-Pant transferase superfamily. AcpS family. Mg(2+) serves as cofactor.

The protein localises to the cytoplasm. The catalysed reaction is apo-[ACP] + CoA = holo-[ACP] + adenosine 3',5'-bisphosphate + H(+). Transfers the 4'-phosphopantetheine moiety from coenzyme A to a Ser of acyl-carrier-protein. This is Holo-[acyl-carrier-protein] synthase from Herminiimonas arsenicoxydans.